Consider the following 280-residue polypeptide: Probable endonuclease 4 (280 aa).

Zn(2+)-binding residues include H69, H109, E145, D179, H182, H216, D229, H231, and E261.

This sequence belongs to the AP endonuclease 2 family. The cofactor is Zn(2+).

It catalyses the reaction Endonucleolytic cleavage to 5'-phosphooligonucleotide end-products.. Its function is as follows. Endonuclease IV plays a role in DNA repair. It cleaves phosphodiester bonds at apurinic or apyrimidinic (AP) sites, generating a 3'-hydroxyl group and a 5'-terminal sugar phosphate. The sequence is that of Probable endonuclease 4 from Erwinia tasmaniensis (strain DSM 17950 / CFBP 7177 / CIP 109463 / NCPPB 4357 / Et1/99).